The following is a 664-amino-acid chain: Ent-copalyl diphosphate synthase 5 (664 aa).

Lys101 serves as a coordination point for substrate. Mg(2+) contacts are provided by Asp233 and Asp235. The DXDD motif motif lies at 233–236; that stretch reads DIDD. Lys320 contributes to the substrate binding site.

The protein belongs to the terpene synthase family. Tpsc subfamily. Mg(2+) is required as a cofactor. Ubiquitous expression in roots, stems, leaves and flowers.

It is found in the plastid. The protein resides in the chloroplast. It catalyses the reaction (2E,6E,10E)-geranylgeranyl diphosphate = ent-copalyl diphosphate. It functions in the pathway secondary metabolite biosynthesis; terpenoid biosynthesis. In terms of biological role, involved in the biosynthesis of ent-kaurene diterpenoids natural products such as oridonin, miltiradiene, eriocalyxin B and nezukol, known to exhibit antitumor, anti-inflammatory and antibacterial activities. Catalyzes the conversion of (2E,6E,10E)-geranylgeranyl diphosphate (GGPP) to ent-copalyl diphosphate (ent-CPP). In Isodon rubescens (Rabdosia rubescens), this protein is Ent-copalyl diphosphate synthase 5.